The chain runs to 80 residues: Putative defensin-like protein 23 (80 aa).

The N-terminal stretch at 1-25 (MTTTMKIMSFAMLLVLLFSIDVVEG) is a signal peptide. Cystine bridges form between Cys31/Cys80, Cys41/Cys66, Cys50/Cys76, and Cys54/Cys78.

It belongs to the DEFL family.

Its subcellular location is the secreted. The polypeptide is Putative defensin-like protein 23 (Arabidopsis thaliana (Mouse-ear cress)).